The primary structure comprises 107 residues: Anti-adapter protein IraM (107 aa).

The protein belongs to the IraM/RssC family.

It localises to the cytoplasm. In terms of biological role, inhibits RpoS proteolysis by regulating RssB activity, thereby increasing the stability of the sigma stress factor RpoS during magnesium starvation. The chain is Anti-adapter protein IraM from Escherichia coli O17:K52:H18 (strain UMN026 / ExPEC).